The primary structure comprises 157 residues: Nucleoside deoxyribosyltransferase (157 aa).

The active-site Nucleophile is Glu-98.

Belongs to the nucleoside deoxyribosyltransferase family. Homohexamer.

It carries out the reaction 2-deoxy-D-ribosyl-base(1) + base(2) = 2-deoxy-D-ribosyl-base(2) + base(1).. Its pathway is nucleotide metabolism; nucleotide salvage pathway. Catalyzes the cleavage of the glycosidic bond of 2'-deoxyribonucleosides and the transfer of the deoxyribosyl moiety to an acceptor purine or pyrimidine base. This chain is Nucleoside deoxyribosyltransferase (ntd), found in Lactobacillus leichmannii.